The chain runs to 492 residues: Auxin transporter-like protein 1 (492 aa).

Over 1–67 (MVPREQAEEA…DAWFSCASNQ (67 aa)) the chain is Cytoplasmic. The helical transmembrane segment at 68 to 85 (VAQVLLTLPYSFSQLGML) threads the bilayer. Topologically, residues 86 to 87 (SG) are extracellular. A helical transmembrane segment spans residues 88–108 (VLLQLFYGFMGSWTAYLISVL). Over 109–143 (YVEYRSRKEKEGVSFKNHVIQWFEVLDGLLGPYWK) the chain is Cytoplasmic. The helical transmembrane segment at 144 to 164 (AAGLAFNCTFLLFGSVIQLIA) threads the bilayer. Over 165–180 (CASNIYYINDRLDKRT) the chain is Extracellular. Residues 181–201 (WTYIFGACCATTVFIPSFHNY) traverse the membrane as a helical segment. Position 202 (Arg202) is a topological domain, cytoplasmic. Residues 203–223 (IWSFLGLGMTTYTAWYLAIAA) form a helical membrane-spanning segment. The Extracellular portion of the chain corresponds to 224-240 (LLNGQAEGITHTGPTKL). Residues 241–261 (VLYFTGATNILYTFGGHAVTV) form a helical membrane-spanning segment. The Cytoplasmic portion of the chain corresponds to 262–274 (EIMHAMWKPAKFK). Residues 275–295 (YIYLLATLYVFTLTLPSASAM) form a helical membrane-spanning segment. Residues 296–322 (YWAFGDELLTHSNAFSLLPKTGWRDAA) lie on the Extracellular side of the membrane. A helical transmembrane segment spans residues 323–343 (VILMLIHQFITFGFACTPLYF). The Cytoplasmic segment spans residues 344–364 (VWEKVIGMHDTKSICLRALAR). The chain crosses the membrane as a helical span at residues 365 to 385 (LPIVVPIWFLAIIFPFFGPIN). A topological domain (extracellular) is located at residue Ser386. A helical transmembrane segment spans residues 387–407 (AVGALLVSFTVYIIPALAHIL). The Cytoplasmic portion of the chain corresponds to 408 to 432 (TYRTASARMNAAEKPPFFLPSWTGM). Residues 433 to 453 (FVLNMFIVVWVLVVGFGLGGW) traverse the membrane as a helical segment. The Extracellular segment spans residues 454 to 492 (ASMVNFIRQIDTFGLFAKCYQCPKPAPALAQSPVPLPHH).

Belongs to the amino acid/polyamine transporter 2 family. Amino acid/auxin permease (AAAP) (TC 2.A.18.1) subfamily.

Its subcellular location is the cell membrane. Functionally, carrier protein involved in proton-driven auxin influx. May mediate the formation of auxin gradient from developing leaves (site of auxin biosynthesis) to tips. The sequence is that of Auxin transporter-like protein 1 from Oryza sativa subsp. japonica (Rice).